We begin with the raw amino-acid sequence, 561 residues long: Oxygen-dependent choline dehydrogenase (561 aa).

Position 6–35 (6–35) interacts with FAD; the sequence is DYIIIGAGSAGNVLATRLTEDADVSVLLLE. His-475 serves as the catalytic Proton acceptor.

Belongs to the GMC oxidoreductase family. It depends on FAD as a cofactor.

The enzyme catalyses choline + A = betaine aldehyde + AH2. The catalysed reaction is betaine aldehyde + NAD(+) + H2O = glycine betaine + NADH + 2 H(+). The protein operates within amine and polyamine biosynthesis; betaine biosynthesis via choline pathway; betaine aldehyde from choline (cytochrome c reductase route): step 1/1. Its function is as follows. Involved in the biosynthesis of the osmoprotectant glycine betaine. Catalyzes the oxidation of choline to betaine aldehyde and betaine aldehyde to glycine betaine at the same rate. This is Oxygen-dependent choline dehydrogenase from Pseudomonas aeruginosa (strain LESB58).